Here is a 288-residue protein sequence, read N- to C-terminus: ATP synthase gamma chain (288 aa).

The protein belongs to the ATPase gamma chain family. F-type ATPases have 2 components, CF(1) - the catalytic core - and CF(0) - the membrane proton channel. CF(1) has five subunits: alpha(3), beta(3), gamma(1), delta(1), epsilon(1). CF(0) has three main subunits: a, b and c.

The protein localises to the cell inner membrane. Functionally, produces ATP from ADP in the presence of a proton gradient across the membrane. The gamma chain is believed to be important in regulating ATPase activity and the flow of protons through the CF(0) complex. This is ATP synthase gamma chain from Acidovorax ebreus (strain TPSY) (Diaphorobacter sp. (strain TPSY)).